A 173-amino-acid polypeptide reads, in one-letter code: Atrial gland and califin peptides (173 aa).

A signal peptide spans 1–21; it reads MKANTMFIILCLSLSTLCVSS. Positions 22 to 34 are excised as a propeptide; the sequence is QSTSVHGKIFVPN. Ile69 carries the isoleucine amide modification. A propeptide spanning residues 73 to 114 is cleaved from the precursor; the sequence is AAGEMEQSEGQNPETKSHSWRKRSVLTPSLSSLGESLESGIS. The segment at 75–94 is disordered; it reads GEMEQSEGQNPETKSHSWRK. The cysteines at positions 141 and 172 are disulfide-linked. At Leu152 the chain carries Leucine amide.

The protein belongs to the molluscan ELH family. Califin A consists of a 36-residue large subunit bound by a single disulfide bond to a 18-residue small subunit.

It localises to the secreted. Functionally, the atrial gland peptide A and peptide B precursors are the source of the 2 peptides that, upon release from this reproductive system gland, initiate the egg-laying process by exciting the bag cell neurons. These neurons, clustered in neural connectives near the abdominal ganglion, in turn release other peptides that act directly on the ganglion and also, via the circulating hemolymph, on many other organs to control the physiological processes of egg-laying. One of these other peptides is the egg-laying hormone. Injected in sexually mature animals califin A excites LB and LC cells of the abdominal ganglion and causes egg-laying. This chain is Atrial gland and califin peptides, found in Aplysia californica (California sea hare).